The following is a 91-amino-acid chain: DNA-directed RNA polymerase subunit Rpo5 (91 aa).

This sequence belongs to the archaeal Rpo5/eukaryotic RPB5 RNA polymerase subunit family. Part of the RNA polymerase complex.

The protein resides in the cytoplasm. It carries out the reaction RNA(n) + a ribonucleoside 5'-triphosphate = RNA(n+1) + diphosphate. DNA-dependent RNA polymerase (RNAP) catalyzes the transcription of DNA into RNA using the four ribonucleoside triphosphates as substrates. This chain is DNA-directed RNA polymerase subunit Rpo5, found in Staphylothermus marinus (strain ATCC 43588 / DSM 3639 / JCM 9404 / F1).